The chain runs to 1855 residues: Chitin synthase 5 (1855 aa).

The Myosin motor domain occupies 1–778 (MSSAPTTQQN…CWRQIVRAGD (778 aa)). An ATP-binding site is contributed by 95 to 102 (GESGTGKT). N-linked (GlcNAc...) asparagine glycans are attached at residues Asn-221, Asn-520, and Asn-558. The tract at residues 585 to 650 (AVQQASVASK…PKSADTQQGA (66 aa)) is disordered. Residues 658–682 (LDNINKSLTAPNTNPYFFFCLKPND) are actin-binding. Asn-662 is a glycosylation site (N-linked (GlcNAc...) asparagine). The next 2 membrane-spanning stretches (helical) occupy residues 887-907 (WLVL…RIIG) and 922-942 (VAIN…MVGF). A Cytochrome b5 heme-binding domain is found at 950-1008 (QHVFSPSELTSYDGKNSDAYVAIRGNVFDLGAFIPQHYPSIVPASALEKYAGTDATNLF). 2 N-linked (GlcNAc...) asparagine glycosylation sites follow: Asn-1037 and Asn-1061. A helical transmembrane segment spans residues 1199–1219 (ILLAVSIMLVSVICFKFLAAL). N-linked (GlcNAc...) asparagine glycans are attached at residues Asn-1422, Asn-1456, and Asn-1562. The next 3 membrane-spanning stretches (helical) occupy residues 1587-1607 (FVVF…GYIV), 1621-1641 (ATTA…IFIV), and 1650-1670 (WMII…LIAF). 2 N-linked (GlcNAc...) asparagine glycosylation sites follow: Asn-1755 and Asn-1767. In terms of domain architecture, DEK-C spans 1797-1852 (MPNDDAILAEIREILATADLMTVTKKSIKAELERRFGVPMDSRRQYIGSATEAILS).

In the N-terminal section; belongs to the TRAFAC class myosin-kinesin ATPase superfamily. Myosin family. It in the C-terminal section; belongs to the chitin synthase family. Class V subfamily.

The protein resides in the apical cell membrane. It localises to the cell septum. The protein localises to the cell tip. It catalyses the reaction [(1-&gt;4)-N-acetyl-beta-D-glucosaminyl](n) + UDP-N-acetyl-alpha-D-glucosamine = [(1-&gt;4)-N-acetyl-beta-D-glucosaminyl](n+1) + UDP + H(+). Its function is as follows. Polymerizes chitin, a structural polymer of the cell wall and septum, by transferring the sugar moiety of UDP-GlcNAc to the non-reducing end of the growing chitin polymer. The sequence is that of Chitin synthase 5 from Zymoseptoria tritici (strain CBS 115943 / IPO323) (Speckled leaf blotch fungus).